Consider the following 362-residue polypeptide: tRNA/tmRNA (uracil-C(5))-methyltransferase (362 aa).

S-adenosyl-L-methionine contacts are provided by Gln-182, Tyr-210, Asn-215, Glu-231, and Asp-293. Cys-318 (nucleophile) is an active-site residue. The Proton acceptor role is filled by Glu-352.

It belongs to the class I-like SAM-binding methyltransferase superfamily. RNA M5U methyltransferase family. TrmA subfamily.

The catalysed reaction is uridine(54) in tRNA + S-adenosyl-L-methionine = 5-methyluridine(54) in tRNA + S-adenosyl-L-homocysteine + H(+). It catalyses the reaction uridine(341) in tmRNA + S-adenosyl-L-methionine = 5-methyluridine(341) in tmRNA + S-adenosyl-L-homocysteine + H(+). Its function is as follows. Dual-specificity methyltransferase that catalyzes the formation of 5-methyluridine at position 54 (m5U54) in all tRNAs, and that of position 341 (m5U341) in tmRNA (transfer-mRNA). This is tRNA/tmRNA (uracil-C(5))-methyltransferase from Neisseria meningitidis serogroup B (strain ATCC BAA-335 / MC58).